A 477-amino-acid polypeptide reads, in one-letter code: Calcium/calmodulin-dependent protein kinase type 1G (477 aa).

In terms of domain architecture, Protein kinase spans 23–277 (FIFMEVLGSG…CEKALRHPWI (255 aa)). ATP contacts are provided by residues 29 to 37 (LGSGAFSEV) and Lys-52. Asp-143 functions as the Proton acceptor in the catalytic mechanism. An autoinhibitory domain region spans residues 277-317 (IDGNTALHRDIYPSVSLQIQKNFAKSKWRQAFNAAAVVHHM). Residues 297–318 (KNFAKSKWRQAFNAAAVVHHMR) are calmodulin-binding. The interval 326–388 (SPSVRQEVEN…SRPSAPSGGR (63 aa)) is disordered. A compositionally biased stretch (low complexity) spans 376-388 (SHSSRPSAPSGGR).

It belongs to the protein kinase superfamily. CAMK Ser/Thr protein kinase family. CaMK subfamily. Post-translationally, may be prenylated on Cys-474. In terms of tissue distribution, highly expressed in brain, in neuronal cell bodies of the central nucleus of amygdala and ventromedial hypothalamic nucleus. Also detected in heart, testis, and kidney.

It is found in the cytoplasm. The protein resides in the golgi apparatus membrane. The protein localises to the cell membrane. The catalysed reaction is L-seryl-[protein] + ATP = O-phospho-L-seryl-[protein] + ADP + H(+). It carries out the reaction L-threonyl-[protein] + ATP = O-phospho-L-threonyl-[protein] + ADP + H(+). With respect to regulation, activated by Ca(2+)/calmodulin. Binding of calmodulin is thought to result in a conformational change and leads to activation through phosphorylation by CAMKK1. Functionally, calcium/calmodulin-dependent protein kinase belonging to a proposed calcium-triggered signaling cascade. In vitro phosphorylates transcription factor CREB1. This chain is Calcium/calmodulin-dependent protein kinase type 1G (Camk1g), found in Mus musculus (Mouse).